The following is a 99-amino-acid chain: Large ribosomal subunit protein uL23c (99 aa).

This sequence belongs to the universal ribosomal protein uL23 family. Part of the 50S ribosomal subunit.

It localises to the plastid. The protein localises to the chloroplast. Binds to 23S rRNA. The chain is Large ribosomal subunit protein uL23c (rpl23) from Emiliania huxleyi (Coccolithophore).